The following is a 508-amino-acid chain: CUGBP Elav-like family member 2 (508 aa).

Necessary for RNA-binding, TNNT2 exon 5 and NMDA R1 exon 21 inclusion regions lie at residues 1-283 and 357-508; these read MRCP…LQNL and LAGM…SKPY. RRM domains lie at 40-123, 132-212, and 423-501; these read IKMF…PADS, RKLF…FADT, and ANLF…LKRS.

It belongs to the CELF/BRUNOL family. In terms of assembly, interacts with A1CF. As to expression, expressed in tongue, spleen and brain (at protein level). Expressed in liver, thigh, stomach, lung and heart to very low levels (at protein level). Expressed in heart, brain, lung and muscle.

Its subcellular location is the nucleus. The protein resides in the cytoplasm. Functionally, RNA-binding protein implicated in the regulation of several post-transcriptional events. Involved in pre-mRNA alternative splicing, mRNA translation and stability. Mediates exon inclusion and/or exclusion in pre-mRNA that are subject to tissue-specific and developmentally regulated alternative splicing. Specifically activates exon 5 inclusion of TNNT2 in embryonic, but not adult, skeletal muscle. Activates TNNT2 exon 5 inclusion by antagonizing the repressive effect of PTB. Acts both as an activator and as a repressor of a pair of coregulated exons: promotes inclusion of the smooth muscle (SM) exon but exclusion of the non-muscle (NM) exon in actinin pre-mRNAs. Promotes inclusion of exonS 21 and exclusion of exon 5 of the NMDA receptor R1 pre-mRNA. Involved in the apoB RNA editing activity. Increases COX2 mRNA stability and inhibits COX2 mRNA translation in epithelial cells after radiation injury. Modulates the cellular apoptosis program by regulating COX2-mediated prostaglandin E2 (PGE2) expression. Binds to (CUG)n triplet repeats in the 3'-UTR of transcripts such as DMPK. Binds to the muscle-specific splicing enhancer (MSE) intronic sites flanking the TNNT2 alternative exon 5. Binds preferentially to UG-rich sequences, in particular UG repeat and UGUU motifs. Binds to apoB mRNA, specifically to AU-rich sequences located immediately upstream of the edited cytidine. Binds AU-rich sequences in the 3'-UTR of COX2 mRNA. Binds to an intronic RNA element responsible for the silencing of exon 21 splicing. Binds to (CUG)n repeats. May be a specific regulator of miRNA biogenesis. Binds to primary microRNA pri-MIR140 and, with CELF1, negatively regulates the processing to mature miRNA. The chain is CUGBP Elav-like family member 2 (Celf2) from Mus musculus (Mouse).